The primary structure comprises 195 residues: Ras-related protein Rab-31 (195 aa).

Gly16, Gly18, Lys19, Ser20, Ser21, Asp32, and His33 together coordinate GTP. Position 20 (Ser20) interacts with Mg(2+). 2 consecutive short sequence motifs (switch) follow at residues 30–42 and 63–79; these read HFDHNISPTIGAS and AGQERFHSLAPMYYRGS. At Ser36 the chain carries Phosphoserine. GTP-binding residues include Thr38, Gly64, Asn119, Asp122, Ala150, and Lys151. Residue Thr38 participates in Mg(2+) binding. A disordered region spans residues 168–195; sequence PPLGPQENGNSGGIKLGNQSLQASRRCC. The segment covering 184–195 has biased composition (polar residues); that stretch reads GNQSLQASRRCC. Residues Cys194 and Cys195 are each lipidated (S-geranylgeranyl cysteine).

The protein belongs to the small GTPase superfamily. Rab family. As to quaternary structure, interacts with OCRL. Interacts (in GDP-bound form) with RIN3 and GAPVD1, which function as guanine exchange factors (GEF). Interacts with EGFR. Interacts with NGFR. Interacts (in GTP-bound form) with EEA1. Interacts (in GTP-bound form) with APPL2; interaction contributes to or enhances recruitment of APPL2 to the phagosomes; interaction enhances Fc-gamma receptor-mediated phagocytosis through PI3K/Akt signaling in macrophages. Mg(2+) serves as cofactor. As to expression, detected in brain astrocytes (at protein level).

The protein resides in the early endosome. It localises to the golgi apparatus. The protein localises to the trans-Golgi network. It is found in the trans-Golgi network membrane. Its subcellular location is the cytoplasmic vesicle. The protein resides in the phagosome. It localises to the phagosome membrane. The enzyme catalyses GTP + H2O = GDP + phosphate + H(+). With respect to regulation, regulated by guanine nucleotide exchange factors (GEFs) including RIN3 and GAPVD1 which promote the exchange of bound GDP for free GTP. Regulated by GTPase activating proteins (GAPs) which increase the GTP hydrolysis activity. Inhibited by GDP dissociation inhibitors (GDIs) which prevent Rab-GDP dissociation. Functionally, the small GTPases Rab are key regulators of intracellular membrane trafficking, from the formation of transport vesicles to their fusion with membranes. Rabs cycle between an inactive GDP-bound form and an active GTP-bound form that is able to recruit to membranes different set of downstream effectors directly responsible for vesicle formation, movement, tethering and fusion. Required for the integrity and for normal function of the Golgi apparatus and the trans-Golgi network. Plays a role in insulin-stimulated translocation of GLUT4 to the cell membrane. Plays a role in the maturation of phagosomes that engulf pathogens, such as S.aureus and Mycobacterium. Plays a role in M6PR transport from the trans-Golgi network to endosomes. Plays a role in the internalization of EGFR from the cell membrane into endosomes. This chain is Ras-related protein Rab-31, found in Mus musculus (Mouse).